Consider the following 77-residue polypeptide: Omega-conotoxin TxVII (77 aa).

A signal peptide spans 1 to 22 (MKLTCMMIVAVLFLTAWTFATA). The propeptide occupies 23 to 49 (DDSGNGLENLFPKAHHEMKNPEASKLN). Disulfide bonds link cysteine 52–cysteine 67, cysteine 59–cysteine 71, and cysteine 66–cysteine 75.

In terms of tissue distribution, expressed by the venom duct.

The protein localises to the secreted. In terms of biological role, omega-conotoxins act at presynaptic membranes, they bind and block voltage-gated calcium channels (Cav). Specifically acts on L-type channels. It blocks molluscan dihydropyridine-sensitive calcium channels. This is Omega-conotoxin TxVII from Conus textile (Cloth-of-gold cone).